The chain runs to 83 residues: Small ribosomal subunit protein eS21 (83 aa).

The protein belongs to the eukaryotic ribosomal protein eS21 family. As to quaternary structure, component of the 40S small ribosomal subunit.

The protein resides in the cytoplasm. Its subcellular location is the cytosol. It is found in the rough endoplasmic reticulum. The chain is Small ribosomal subunit protein eS21 (RpS21) from Spodoptera frugiperda (Fall armyworm).